Consider the following 335-residue polypeptide: Protein-arginine N-acetylglucosaminyltransferase SseK3 (335 aa).

UDP-N-acetyl-alpha-D-glucosamine contacts are provided by residues 51–53 and Y75; that span reads QWF. N-beta-linked (GlcNAc) arginine; by autocatalysis glycans are attached at residues R153 and R184. Position 224-227 (224-227) interacts with UDP-N-acetyl-alpha-D-glucosamine; the sequence is YLDA. The DXD motif motif lies at 226-228; the sequence is DAD. D228 contacts Mn(2+). The active-site Proton acceptor is E258. The N-beta-linked (GlcNAc) arginine; by autocatalysis glycan is linked to R305. D325 and S327 together coordinate Mn(2+). Residues S327 and 332–335 contribute to the UDP-N-acetyl-alpha-D-glucosamine site; that span reads SSWR. A glycan (N-beta-linked (GlcNAc) arginine; by autocatalysis) is linked at R335.

The protein belongs to the glycosyltransferase NleB family. As to quaternary structure, interacts with host TRIM32; without mediating its GlcNAcylation. Mn(2+) serves as cofactor. Auto-glycosylated: arginine GlcNAcylation is required for activity toward death domain-containing host target proteins.

The protein localises to the secreted. The protein resides in the host Golgi apparatus. The catalysed reaction is L-arginyl-[protein] + UDP-N-acetyl-alpha-D-glucosamine = N(omega)-(N-acetyl-beta-D-glucosaminyl)-L-arginyl-[protein] + UDP + H(+). Its function is as follows. Protein-arginine N-acetylglucosaminyltransferase effector that disrupts TNF signaling in infected cells, including NF-kappa-B signaling and apoptosis. Acts by catalyzing the transfer of a single N-acetylglucosamine (GlcNAc) to a conserved arginine residue in the death domain of host proteins such as TRADD, TNFRSF1A/TNFR1 and TNFRSF10B/TRAILR2: arginine GlcNAcylation prevents homotypic/heterotypic death domain interactions and assembly of the oligomeric TNF-alpha receptor complex, thereby disrupting TNF signaling. Also acts on host proteins without a death domain: catalyzes arginine GlcNAcylation of host small Rab GTPase (Rab1, Rab5 and Rab11), thereby preventing GTPase activity and leading to impaired host vesicular protein transport. Also mediates auto-GlcNAcylation, which is required for activity toward death domain-containing host target proteins. This Salmonella typhimurium (strain SL1344) protein is Protein-arginine N-acetylglucosaminyltransferase SseK3.